Consider the following 118-residue polypeptide: Large ribosomal subunit protein uL18 (118 aa).

The span at 1–10 (MKTTRRDATR) shows a compositional bias: basic and acidic residues. The segment at 1–20 (MKTTRRDATRSRHQRVRRKV) is disordered. Residues 11 to 20 (SRHQRVRRKV) are compositionally biased toward basic residues.

This sequence belongs to the universal ribosomal protein uL18 family. In terms of assembly, part of the 50S ribosomal subunit; part of the 5S rRNA/L5/L18/L25 subcomplex. Contacts the 5S and 23S rRNAs.

Its function is as follows. This is one of the proteins that bind and probably mediate the attachment of the 5S RNA into the large ribosomal subunit, where it forms part of the central protuberance. The polypeptide is Large ribosomal subunit protein uL18 (Acaryochloris marina (strain MBIC 11017)).